A 319-amino-acid chain; its full sequence is Non-homologous end joining protein Ku (319 aa).

One can recognise a Ku domain in the interval 10-188 (ISFGLVTVPI…PQGIELSEDE (179 aa)). The tract at residues 252 to 319 (QSVAKAKASR…TTPKKPRRSA (68 aa)) is disordered. The segment covering 260–274 (SRGESGEADVHELPR) has biased composition (basic and acidic residues). Residues 305 to 319 (TAAKKTTPKKPRRSA) are compositionally biased toward basic residues.

Belongs to the prokaryotic Ku family. As to quaternary structure, homodimer. Interacts with LigD.

Functionally, with LigD forms a non-homologous end joining (NHEJ) DNA repair enzyme, which repairs dsDNA breaks with reduced fidelity. Binds linear dsDNA with 5'- and 3'- overhangs but not closed circular dsDNA nor ssDNA. Recruits and stimulates the ligase activity of LigD. The protein is Non-homologous end joining protein Ku of Streptomyces avermitilis (strain ATCC 31267 / DSM 46492 / JCM 5070 / NBRC 14893 / NCIMB 12804 / NRRL 8165 / MA-4680).